The sequence spans 385 residues: Trans-enoyl reductase tasC (385 aa).

49–52 contributes to the NADP(+) binding site; sequence VDTK. 136 to 143 contacts substrate; the sequence is NSWYTVAW. NADP(+)-binding positions include 196–199, 219–222, and 284–285; these read SSST, SARN, and LD. 305-309 serves as a coordination point for substrate; that stretch reads GPELM. 374–375 is a binding site for NADP(+); that stretch reads VS.

This sequence belongs to the zinc-containing alcohol dehydrogenase family. Monomer.

It catalyses the reaction (2S,4S)-4-hydroxy-4-methylglutamate + 8 malonyl-CoA + 3 S-adenosyl-L-methionine + ATP + 8 NADPH + 11 H(+) = (2S)-3-[(2S)-3,5-dioxo-4-[(2E,4R,6R,8E,10E,12E)-4,6,12-trimethyltetradeca-2,8,10,12-tetraenoyl]pyrrolidin-2-yl]-2-hydroxy-2-methylpropanoate + AMP + 3 S-adenosyl-L-homocysteine + 8 CO2 + diphosphate + 8 NADP(+) + 8 CoA + 6 H2O. The enzyme catalyses (2S,4R)-4-hydroxy-4-methylglutamate + 8 malonyl-CoA + 3 S-adenosyl-L-methionine + ATP + 8 NADPH + 11 H(+) = (2R)-3-[(2S)-3,5-dioxo-4-[(2E,4R,6R,8E,10E,12E)-4,6,12-trimethyltetradeca-2,8,10,12-tetraenoyl]pyrrolidin-2-yl]-2-hydroxy-2-methylpropanoate + AMP + 3 S-adenosyl-L-homocysteine + 8 CO2 + diphosphate + 8 NADP(+) + 8 CoA + 6 H2O. It functions in the pathway secondary metabolite biosynthesis. Functionally, trans-enoyl reductase; part of the gene cluster that mediates the biosynthesis of the tetramic acids Sch210971 and Sch210972, potential anti-HIV fungal natural product that contain a decalin core. The PKS module of tasS together with the enoylreductase tasC catalyze the formation of the polyketide unit which is then conjugated to 4-hydroxyl-4-methyl glutamate (HMG) by the condensation domain of the tasS NRPS module. One unique structural feature of Sch210971 and Sch210972 is the tetramic acid motif proposed to be derived from the non-proteinogenic amino acid HMG, by a Dieckmann-type condensation catalyzed by the reductase domain of tasS. The aldolase tasA catalyzes the aldol condensation of 2 molecules of pyruvic acid to yield the intermediate 4-hydroxyl-4-methyl-2-oxoglutarate (HMOG), which can then be stereoselectively transaminated, may be by tasG, to form HMG. The Diels-Alderase tas3 then uses the Dieckmann product of tasS as substrate and catalyzes the Diels-Alder cycloaddition to form the decalin ring of Sch210971 and Sch210972. The polypeptide is Trans-enoyl reductase tasC (Hapsidospora irregularis).